The sequence spans 137 residues: DNA-directed RNA polymerase I subunit RPA14 (137 aa).

Positions 100–137 (PPAQDFSAAPIQVSTTEKKETSIGVSATGGKKTTFADE) are disordered. Position 121 is a phosphoserine (serine 121).

As to quaternary structure, component of the RNA polymerase I (Pol I) complex consisting of 14 subunits: RPA135, RPA190, RPC40, RPA14, RPB5, RPO26, RPA43, RPB8, RPA12, RPB10, RPC19, RPC10, RPA49 and RPA34. The complex is composed of a horseshoe-shaped core containing ten subunits (RPA135, RPA190, RPB5, RPO26, RPB8, RPB10, RPC10, RPA12, RPC19 and RPC40) where RPA135 and RPA190 form the DNA-binding cleft. Outside of the core, RPA14 and RPA43 form the stalk that mediates interactions with transcription initiation factors and newly synthesized RNA. The N-terminus is blocked.

The protein localises to the nucleus. The protein resides in the nucleolus. In terms of biological role, DNA-dependent RNA polymerases catalyze the transcription of DNA into RNA using the four ribonucleoside triphosphates as substrates. Component of RNA polymerase I (Pol I) which synthesizes ribosomal RNA precursors. RPA14 seems to play a role in the stability of subunits RPO26 and RPA43. In vitro, the RPA14-RPA43 subcomplex binds single-stranded RNA. The protein is DNA-directed RNA polymerase I subunit RPA14 (RPA14) of Saccharomyces cerevisiae (strain ATCC 204508 / S288c) (Baker's yeast).